A 393-amino-acid polypeptide reads, in one-letter code: Acetyl-CoA acetyltransferase (393 aa).

The active-site Acyl-thioester intermediate is Cys88. Active-site proton acceptor residues include His349 and Cys379.

Belongs to the thiolase-like superfamily. Thiolase family.

The protein resides in the cytoplasm. It carries out the reaction 2 acetyl-CoA = acetoacetyl-CoA + CoA. It participates in metabolic intermediate biosynthesis; (R)-mevalonate biosynthesis; (R)-mevalonate from acetyl-CoA: step 1/3. In Pseudomonas aeruginosa (strain ATCC 15692 / DSM 22644 / CIP 104116 / JCM 14847 / LMG 12228 / 1C / PRS 101 / PAO1), this protein is Acetyl-CoA acetyltransferase (atoB).